Here is a 401-residue protein sequence, read N- to C-terminus: MKVAKASLLTILAHSVSARFLAEDEINRVQLYPAGSEPEKYLIELAPGDTRWVTEEEKWELRRNGNRFFDITDHKDLGATRLRTKTKSVFPEKCSLQDKVKPLLKDLDKSEIQKNLEKFTSFHTRYYKSDYGRQSSEWLLAKIDSIIKDAGADKNVYAQPFPHTWQQSSIIVTIPGKSNSTVIIGAHQDSINLWLPSILAAPGADDDGSGSMTILEAFRTLLKSKDIVSGKADNTIEFHWYSAEEGGLLGSQAIFSSYEKEGRDIKAMLQQDMTGFVQRTLDAGQPESVGVITDFVDPGLTGFIKKVIVEYCKVPYVETKCGYACSDHASASKAGYPSAFVIESAFEYSDNHIHSVDDTIKYLSFDHMLEHAKMTLGLVYELGFTDFTALEKKGESVSEEL.

Residues 1–18 (MKVAKASLLTILAHSVSA) form the signal peptide. Positions 19-87 (RFLAEDEINR…GATRLRTKTK (69 aa)) are excised as a propeptide. A glycan (N-linked (GlcNAc...) asparagine) is linked at Asn179. The Zn(2+) site is built by His187, Asp206, Glu245, and Asp272. Cys321 and Cys325 are oxidised to a cystine. A Zn(2+)-binding site is contributed by His354.

It belongs to the peptidase M28 family. M28E subfamily. Monomer. The cofactor is Zn(2+).

It is found in the secreted. Extracellular aminopeptidase that allows assimilation of proteinaceous substrates. The sequence is that of Leucine aminopeptidase 1 (LAP1) from Colletotrichum graminicola (strain M1.001 / M2 / FGSC 10212) (Maize anthracnose fungus).